A 565-amino-acid polypeptide reads, in one-letter code: Proline--tRNA ligase (565 aa).

It belongs to the class-II aminoacyl-tRNA synthetase family. ProS type 1 subfamily. As to quaternary structure, homodimer.

It localises to the cytoplasm. It catalyses the reaction tRNA(Pro) + L-proline + ATP = L-prolyl-tRNA(Pro) + AMP + diphosphate. Functionally, catalyzes the attachment of proline to tRNA(Pro) in a two-step reaction: proline is first activated by ATP to form Pro-AMP and then transferred to the acceptor end of tRNA(Pro). As ProRS can inadvertently accommodate and process non-cognate amino acids such as alanine and cysteine, to avoid such errors it has two additional distinct editing activities against alanine. One activity is designated as 'pretransfer' editing and involves the tRNA(Pro)-independent hydrolysis of activated Ala-AMP. The other activity is designated 'posttransfer' editing and involves deacylation of mischarged Ala-tRNA(Pro). The misacylated Cys-tRNA(Pro) is not edited by ProRS. The chain is Proline--tRNA ligase from Francisella tularensis subsp. holarctica (strain FTNF002-00 / FTA).